A 368-amino-acid chain; its full sequence is MTPNKPWDDKKEMITTALESGISYVLDLDDYDKIQKLGNVKIVANSDDADIYLVGINGEGDGSLILSEDLNQSQDLQEAKKAKREGKTVCAYVEITDKNHEQLAVSLGSVADYIILISTDWTVIPLENIIADLQKADVKIIAAVADEDGAKLAIETLEHGTDGVIFEANDFNQIKKIAQLVVDASKIKYDLKVATVTNVKPLGSGDRVCVDTTDMMKPGEGMLIGSYSKSLFLVHSESLESEYVASRPFRVNAGPVQAYVMVPGNKTRYLSELVAGDEVLIVNTEGETRTAYVGRSKIERRPLILIEAEYEGKTIRTLLQNAETIRIVDADNNPLSVADIKIGDKVKVYVESNARHFGIAIDETIIEQ.

Belongs to the archaeal-type DHQ synthase family.

It carries out the reaction 2-amino-2,3,7-trideoxy-D-lyxo-hept-6-ulosonate + NAD(+) + H2O = 3-dehydroquinate + NH4(+) + NADH + H(+). Catalyzes the oxidative deamination and cyclization of 2-amino-3,7-dideoxy-D-threo-hept-6-ulosonic acid (ADH) to yield 3-dehydroquinate (DHQ), which is fed into the canonical shikimic pathway of aromatic amino acid biosynthesis. This chain is 3-dehydroquinate synthase, found in Methanobrevibacter smithii (strain ATCC 35061 / DSM 861 / OCM 144 / PS).